The chain runs to 392 residues: 26S proteasome regulatory subunit 8 homolog (392 aa).

176–183 provides a ligand contact to ATP; it reads GPPGTGKT.

This sequence belongs to the AAA ATPase family. The 26S proteasome consists of a 20S proteasome core and two 19S regulatory subunits. The 20S proteasome core is composed of 28 subunits that are arranged in four stacked rings, resulting in a barrel-shaped structure. The two end rings are each formed by seven alpha subunits, and the two central rings are each formed by seven beta subunits. The catalytic chamber with the active sites is on the inside of the barrel.

It localises to the cytoplasm. The protein localises to the nucleus. Functionally, acts as a regulatory subunit of the 26S proteasome which degrades poly-ubiquitinated proteins in the cytoplasm and in the nucleus. It is essential for the regulated turnover of proteins and for the removal of misfolded proteins. The proteasome is a multicatalytic proteinase complex that is characterized by its ability to cleave peptides with Arg, Phe, Tyr, Leu, and Glu adjacent to the leaving group at neutral or slightly basic pH. The chain is 26S proteasome regulatory subunit 8 homolog (RPT6) from Encephalitozoon cuniculi (strain GB-M1) (Microsporidian parasite).